We begin with the raw amino-acid sequence, 284 residues long: Sulfotransferase 2A6 (284 aa).

43 to 48 is a binding site for 3'-phosphoadenylyl sulfate; it reads KSGTNW. Histidine 98 (proton acceptor) is an active-site residue. 3'-phosphoadenylyl sulfate is bound by residues arginine 120, serine 128, tyrosine 183, 217–222, and 246–248; these read SSFQVM and RNG.

The protein belongs to the sulfotransferase 1 family. As to quaternary structure, oligomer. As to expression, liver, exhibiting a sex-dependent spatial localization in the lobule of the liver.

Its subcellular location is the cytoplasm. The protein resides in the cytosol. The enzyme catalyses an alcohol + 3'-phosphoadenylyl sulfate = an alkyl sulfate + adenosine 3',5'-bisphosphate + H(+). It catalyses the reaction glycolithocholate + 3'-phosphoadenylyl sulfate = sulfoglycolithocholate + adenosine 3',5'-bisphosphate + H(+). It carries out the reaction taurolithocholate + 3'-phosphoadenylyl sulfate = taurolithocholate 3-sulfate + adenosine 3',5'-bisphosphate + H(+). The catalysed reaction is 3beta-hydroxyandrost-5-en-17-one + 3'-phosphoadenylyl sulfate = dehydroepiandrosterone 3-sulfate + adenosine 3',5'-bisphosphate + H(+). The enzyme catalyses 3beta-hydroxy-5-cholenate + 3'-phosphoadenylyl sulfate = 3beta-sulfo-5-cholenate + adenosine 3',5'-bisphosphate + H(+). It catalyses the reaction deoxycholate + 3'-phosphoadenylyl sulfate = 3alpha-sulfodeoxycholate + adenosine 3',5'-bisphosphate + H(+). It carries out the reaction glycodeoxycholate + 3'-phosphoadenylyl sulfate = 3alpha-sulfoglycodeoxycholate + adenosine 3',5'-bisphosphate + H(+). The catalysed reaction is taurodeoxycholate + 3'-phosphoadenylyl sulfate = 3alpha-sulfotaurodeoxycholate + adenosine 3',5'-bisphosphate + H(+). Functionally, sulfotransferase that utilizes 3'-phospho-5'-adenylyl sulfate (PAPS) as sulfonate donor to catalyze the sulfonation of the hydroxyl group of hydroxysteroids and bile acids. Prefered substrates are dehydroepiandrosterone (DHEA, also known as 3beta-hydroxyandrost-5-en-17-one) and 3beta-hydroxy-5-cholenoate, but can also catalyze deoxycholate and its conjugates, and lithocholate conjugates, in vitro. The polypeptide is Sulfotransferase 2A6 (Rattus norvegicus (Rat)).